The chain runs to 141 residues: Lutropin subunit beta (141 aa).

A signal peptide spans 1–20; it reads MEMLQGLLLWLLLSVAGVWA. Serine 21 carries the blocked amino end (Ser) modification. Intrachain disulfides connect cysteine 29–cysteine 77, cysteine 43–cysteine 92, cysteine 46–cysteine 130, cysteine 54–cysteine 108, cysteine 58–cysteine 110, and cysteine 113–cysteine 120. Asparagine 33 carries N-linked (GlcNAc...) asparagine glycosylation.

Belongs to the glycoprotein hormones subunit beta family. Heterodimer of a common alpha chain and a unique beta chain which confers biological specificity to thyrotropin, lutropin, follitropin and gonadotropin.

The protein resides in the secreted. Its function is as follows. Promotes spermatogenesis and ovulation by stimulating the testes and ovaries to synthesize steroids. This is Lutropin subunit beta (LHB) from Sus scrofa (Pig).